The primary structure comprises 327 residues: Acetaldehyde dehydrogenase 6 (327 aa).

Residue 15–18 (SGNI) coordinates NAD(+). Cysteine 133 acts as the Acyl-thioester intermediate in catalysis. NAD(+) contacts are provided by residues 164–172 (SAGPGTRAN) and asparagine 297.

This sequence belongs to the acetaldehyde dehydrogenase family.

It carries out the reaction acetaldehyde + NAD(+) + CoA = acetyl-CoA + NADH + H(+). In Rhodococcus opacus (strain B4), this protein is Acetaldehyde dehydrogenase 6.